The chain runs to 434 residues: Asparagine--tRNA ligase (434 aa).

Belongs to the class-II aminoacyl-tRNA synthetase family.

It localises to the cytoplasm. It catalyses the reaction tRNA(Asn) + L-asparagine + ATP = L-asparaginyl-tRNA(Asn) + AMP + diphosphate + H(+). The polypeptide is Asparagine--tRNA ligase (Pyrococcus horikoshii (strain ATCC 700860 / DSM 12428 / JCM 9974 / NBRC 100139 / OT-3)).